Consider the following 572-residue polypeptide: Urease subunit alpha (572 aa).

In terms of domain architecture, Urease spans 136-572 (GGIDTHIHWI…VPLAQRYFLF (437 aa)). His141, His143, and Lys224 together coordinate Ni(2+). Residue Lys224 is modified to N6-carboxylysine. A substrate-binding site is contributed by His226. Ni(2+)-binding residues include His253 and His279. His327 acts as the Proton donor in catalysis. Residue Asp367 coordinates Ni(2+).

The protein belongs to the metallo-dependent hydrolases superfamily. Urease alpha subunit family. Heterotrimer of UreA (gamma), UreB (beta) and UreC (alpha) subunits. Three heterotrimers associate to form the active enzyme. Ni cation is required as a cofactor. Carboxylation allows a single lysine to coordinate two nickel ions.

It is found in the cytoplasm. The catalysed reaction is urea + 2 H2O + H(+) = hydrogencarbonate + 2 NH4(+). It functions in the pathway nitrogen metabolism; urea degradation; CO(2) and NH(3) from urea (urease route): step 1/1. In Actinobacillus pleuropneumoniae (Haemophilus pleuropneumoniae), this protein is Urease subunit alpha.